Consider the following 435-residue polypeptide: Putative acid phosphatase F26C11.1 (435 aa).

The active-site Nucleophile is histidine 38. Aspartate 317 functions as the Proton donor in the catalytic mechanism. A disulfide bridge connects residues cysteine 382 and cysteine 388.

It belongs to the histidine acid phosphatase family.

The enzyme catalyses a phosphate monoester + H2O = an alcohol + phosphate. In Caenorhabditis elegans, this protein is Putative acid phosphatase F26C11.1.